An 80-amino-acid polypeptide reads, in one-letter code: Defensin-like protein 50 (80 aa).

Residues 1-27 form the signal peptide; the sequence is MGFTKIVVTFFLVVMLAVSSSSQNAMA. Intrachain disulfides connect C39–C79, C43–C66, C52–C77, and C56–C78.

The protein belongs to the DEFL family.

Its subcellular location is the secreted. The polypeptide is Defensin-like protein 50 (LCR49) (Arabidopsis thaliana (Mouse-ear cress)).